Here is a 686-residue protein sequence, read N- to C-terminus: Heat shock 70 kDa protein 12B (686 aa).

The tract at residues 12–53 (LYIGSSPERSPVPSPPGSPRTQESCGIAPLTPSQSPKPEVRA) is disordered. Phosphoserine occurs at positions 25 and 29. Threonine 42 is subject to Phosphothreonine. Serine 44, serine 46, and serine 276 each carry phosphoserine.

The protein belongs to the heat shock protein 70 family. Highest expression in muscle and heart. Lower levels in liver and kidney.

The sequence is that of Heat shock 70 kDa protein 12B (HSPA12B) from Homo sapiens (Human).